The primary structure comprises 593 residues: Auxin response factor 12 (593 aa).

A DNA-binding region (TF-B3) is located at residues 126–228 (FTKVLTASDT…ELRVGIRRAR (103 aa)). The 82-residue stretch at 511 to 592 (RTCTKVQMQG…MVKKIFIQKR (82 aa)) folds into the PB1 domain.

It belongs to the ARF family. In terms of assembly, homodimers and heterodimers.

Its subcellular location is the nucleus. Its function is as follows. Auxin response factors (ARFs) are transcriptional factors that bind specifically to the DNA sequence 5'-TGTCTC-3' found in the auxin-responsive promoter elements (AuxREs). Could act as transcriptional activator or repressor. Formation of heterodimers with Aux/IAA proteins may alter their ability to modulate early auxin response genes expression. This chain is Auxin response factor 12 (ARF12), found in Arabidopsis thaliana (Mouse-ear cress).